The primary structure comprises 508 residues: Zinc finger CCCH-type with G patch domain-containing protein (508 aa).

The segment at 67-86 (QQESSHHDSGTPETDTKTSV) is disordered. The span at 69 to 86 (ESSHHDSGTPETDTKTSV) shows a compositional bias: basic and acidic residues. The C3H1-type zinc-finger motif lies at 161 to 188 (RSMVPCPYFLEGKCKFAGAECRFSHGYL). The segment at 253–282 (IYPLGPEEVESDSESDSQSDTGDSSSSKAA) is disordered. Residues 259–269 (EEVESDSESDS) show a composition bias toward acidic residues. Low complexity predominate over residues 270–279 (QSDTGDSSSS). In terms of domain architecture, G-patch spans 310–356 (TKGIGSKLMAKMGYIFGKGLGKDGEGRVEPIEVVVLPQGKSLDKCAE). The disordered stretch occupies residues 404–426 (SLHDLRVSHPGAKPDIRKTRKSA).

It is found in the nucleus. Its function is as follows. Transcription repressor. This chain is Zinc finger CCCH-type with G patch domain-containing protein, found in Nematostella vectensis (Starlet sea anemone).